The chain runs to 279 residues: MPTDGSYFHLHLVSDSTGETLITVSRAVSAQYANVSPVEHVYPLVRSQKQLDRVLAEIEEAPGIVLFTLLEQDLVERLEKKCQDINIPSLSIIGPVMQLFQAYLGSSTTGRVGAQHTLNAEYFKRIDALNYSMMHDDGQHAEGLEEADVVLVGVSRTSKTPTSIYLANRGIRTANVPLVPGIPIPHQLESLVKPLVVSLHATPERLIQVRQNRLLSIGAAIGNEDYIDRQTVTDEVSYARRLSAKYGWALLEVTRRSIEETAAAVMKLLADRQRQRPVE.

153 to 160 contacts ADP; that stretch reads GVSRTSKT.

The protein belongs to the pyruvate, phosphate/water dikinase regulatory protein family. PDRP subfamily.

It carries out the reaction N(tele)-phospho-L-histidyl/L-threonyl-[pyruvate, phosphate dikinase] + ADP = N(tele)-phospho-L-histidyl/O-phospho-L-threonyl-[pyruvate, phosphate dikinase] + AMP + H(+). The catalysed reaction is N(tele)-phospho-L-histidyl/O-phospho-L-threonyl-[pyruvate, phosphate dikinase] + phosphate + H(+) = N(tele)-phospho-L-histidyl/L-threonyl-[pyruvate, phosphate dikinase] + diphosphate. Bifunctional serine/threonine kinase and phosphorylase involved in the regulation of the pyruvate, phosphate dikinase (PPDK) by catalyzing its phosphorylation/dephosphorylation. The polypeptide is Putative pyruvate, phosphate dikinase regulatory protein (Rhodopseudomonas palustris (strain BisA53)).